We begin with the raw amino-acid sequence, 214 residues long: UPF0758 protein (214 aa).

Positions 92–214 (VLSSWQALLD…ELSFRAEGLL (123 aa)) constitute an MPN domain. Zn(2+) is bound by residues H163, H165, and D176. The JAMM motif motif lies at 163–176 (HNHPSGDPTPSQAD).

It belongs to the UPF0758 family.

The sequence is that of UPF0758 protein from Rhodobacter capsulatus (Rhodopseudomonas capsulata).